The primary structure comprises 105 residues: Blood plasma apolipoprotein LAL1 (105 aa).

The first 21 residues, 1-21, serve as a signal peptide directing secretion; the sequence is MKLHVAALATLAVVCILAAGS. Positions 22-29 are excised as a propeptide; that stretch reads EAAPKAMS.

In terms of tissue distribution, plasma.

It is found in the secreted. The sequence is that of Blood plasma apolipoprotein LAL1 from Petromyzon marinus (Sea lamprey).